The following is a 126-amino-acid chain: MHLSQLLACALLLALLSLRPSEAKPGAPPKVPRTPSGEEVAEPQAAGGGQKKGDKTPGGGGANLKDDRSRLLRDLRVDTKSRAAWTRLLHEHPNARKYKGGNKKGLSKGCFGLKLDRIGSMSGLGC.

An N-terminal signal peptide occupies residues 1 to 23 (MHLSQLLACALLLALLSLRPSEA). The segment at 20 to 71 (PSEAKPGAPPKVPRTPSGEEVAEPQAAGGGQKKGDKTPGGGGANLKDDRSRL) is disordered. A propeptide spanning residues 24-73 (KPGAPPKVPRTPSGEEVAEPQAAGGGQKKGDKTPGGGGANLKDDRSRLLR) is cleaved from the precursor. Residues 46 to 62 (AGGGQKKGDKTPGGGGA) show a composition bias toward gly residues. A disulfide bridge links cysteine 110 with cysteine 126.

It belongs to the natriuretic peptide family. Post-translationally, degraded by IDE (in vitro).

The protein resides in the secreted. Its function is as follows. Hormone which plays a role in endochondral ossification through regulation of cartilaginous growth plate chondrocytes proliferation and differentiation. May also be vasoactive and natriuretic. Acts by specifically binding and stimulating NPR2 to produce cGMP. Binds the clearance receptor NPR3. This is C-type natriuretic peptide (NPPC) from Bos taurus (Bovine).